Consider the following 268-residue polypeptide: Tryptophan synthase alpha chain (268 aa).

Catalysis depends on proton acceptor residues Glu-49 and Asp-60.

The protein belongs to the TrpA family. Tetramer of two alpha and two beta chains.

It catalyses the reaction (1S,2R)-1-C-(indol-3-yl)glycerol 3-phosphate + L-serine = D-glyceraldehyde 3-phosphate + L-tryptophan + H2O. The protein operates within amino-acid biosynthesis; L-tryptophan biosynthesis; L-tryptophan from chorismate: step 5/5. The alpha subunit is responsible for the aldol cleavage of indoleglycerol phosphate to indole and glyceraldehyde 3-phosphate. The protein is Tryptophan synthase alpha chain of Haemophilus influenzae (strain ATCC 51907 / DSM 11121 / KW20 / Rd).